Consider the following 352-residue polypeptide: Alanine racemase (352 aa).

Residue Lys34 is the Proton acceptor; specific for D-alanine of the active site. Position 34 is an N6-(pyridoxal phosphate)lysine (Lys34). Arg126 contacts substrate. Tyr248 acts as the Proton acceptor; specific for L-alanine in catalysis. Substrate is bound at residue Met296.

It belongs to the alanine racemase family. It depends on pyridoxal 5'-phosphate as a cofactor.

The catalysed reaction is L-alanine = D-alanine. Its pathway is amino-acid biosynthesis; D-alanine biosynthesis; D-alanine from L-alanine: step 1/1. Catalyzes the interconversion of L-alanine and D-alanine. May also act on other amino acids. The chain is Alanine racemase (alr) from Deinococcus deserti (strain DSM 17065 / CIP 109153 / LMG 22923 / VCD115).